Here is a 314-residue protein sequence, read N- to C-terminus: Olfactory receptor 10A3 (314 aa).

Residues 1–25 (MKRQNQSCVVEFILLGFSNFPELQV) lie on the Extracellular side of the membrane. The N-linked (GlcNAc...) asparagine glycan is linked to asparagine 5. A helical transmembrane segment spans residues 26 to 46 (QLFGVFLVIYVVTLMGNAIIT). Over 47 to 54 (VIISLNQS) the chain is Cytoplasmic. Residues 55–75 (LHVPMYLFLLNLSVVEVSFSA) form a helical membrane-spanning segment. At 76–99 (VITPEMLVVLSTEKTMISFVGCFA) the chain is on the extracellular side. A disulfide bridge links cysteine 97 with cysteine 189. The helical transmembrane segment at 100 to 120 (QMYFILLFGGTECFLLGAMAY) threads the bilayer. Topologically, residues 121–139 (DRFAAICHPLNYPVIMNRG) are cytoplasmic. Residues 140 to 160 (VFMKLVIFSWISGIMVATVQT) form a helical membrane-spanning segment. Topologically, residues 161 to 197 (TWVFSFPFCGPNEINHLFCETPPVLELVCADTFLFEI) are extracellular. A helical membrane pass occupies residues 198-217 (YAFTGTILIVMVPFLLILLS). Residues 218-237 (YIRVLFAILKMPSTTGRQKA) lie on the Cytoplasmic side of the membrane. Residues 238 to 258 (FSTCASHLTSVTLFYGTANMT) form a helical membrane-spanning segment. Residues 259–271 (YLQPKSGYSPETK) are Extracellular-facing. A helical transmembrane segment spans residues 272–292 (KLISLAYTLLTPLLNPLIYSL). At 293-314 (RNSEMKRTLIKLWRRKVILHTF) the chain is on the cytoplasmic side.

The protein belongs to the G-protein coupled receptor 1 family.

It is found in the cell membrane. Odorant receptor. The sequence is that of Olfactory receptor 10A3 (OR10A3) from Homo sapiens (Human).